Consider the following 466-residue polypeptide: MGKTLYEKVYDAHVAVAAEGENPILYIDRHLVHEVTSPQAFDGLREKGRKVRQVSKTFATMDHNVSTTTKDINASGEMARIQMETLSKNCEEFGVTLYDINHKYQGIVHVMGPELGITLPGMTIVCGDSHTATHGAFGSLAFGIGTSEVEHVLATQTLKQARAKTMKIEVKGKVAPGITAKDIVLAIIGETTAAGGTGYVVEFCGEAITDLSMEGRMTVCNMAIELGAKAGLIAPDETTFEYIKGRKFSPQGSDFDAAVEYWKTLKTDDEAQFDAVVTLNAADIKPQVTWGTNPGQVIAVDQPIPAPESFADPVEKASAEKALAYMGLEAGKSLSDYNVDKVFVGSCTNSRIEDMRAAAEIAKGRKVASHVQALIVPGSEQVKAQAEAEGLDVIFKEAGFEWRLPGCSMCLAMNNDRLGPHERCASTSNRNFEGRQGRDGRTHLVSPAMAAAAAIAGHFVDIRELD.

Residues Cys347, Cys407, and Cys410 each contribute to the [4Fe-4S] cluster site.

It belongs to the aconitase/IPM isomerase family. LeuC type 1 subfamily. As to quaternary structure, heterodimer of LeuC and LeuD. Requires [4Fe-4S] cluster as cofactor.

The enzyme catalyses (2R,3S)-3-isopropylmalate = (2S)-2-isopropylmalate. It functions in the pathway amino-acid biosynthesis; L-leucine biosynthesis; L-leucine from 3-methyl-2-oxobutanoate: step 2/4. In terms of biological role, catalyzes the isomerization between 2-isopropylmalate and 3-isopropylmalate, via the formation of 2-isopropylmaleate. The sequence is that of 3-isopropylmalate dehydratase large subunit from Vibrio campbellii (strain ATCC BAA-1116).